The chain runs to 468 residues: Glutamate--tRNA ligase (468 aa).

Residues 12–22 carry the 'HIGH' region motif; it reads PSPTGFIHLGN. Positions 244–248 match the 'KMSKS' region motif; it reads KMSKR. Lysine 247 contributes to the ATP binding site.

It belongs to the class-I aminoacyl-tRNA synthetase family. Glutamate--tRNA ligase type 1 subfamily. Monomer.

Its subcellular location is the cytoplasm. It catalyses the reaction tRNA(Glu) + L-glutamate + ATP = L-glutamyl-tRNA(Glu) + AMP + diphosphate. Functionally, catalyzes the attachment of glutamate to tRNA(Glu) in a two-step reaction: glutamate is first activated by ATP to form Glu-AMP and then transferred to the acceptor end of tRNA(Glu). The polypeptide is Glutamate--tRNA ligase (Polynucleobacter asymbioticus (strain DSM 18221 / CIP 109841 / QLW-P1DMWA-1) (Polynucleobacter necessarius subsp. asymbioticus)).